The primary structure comprises 990 residues: Presequence protease, mitochondrial (990 aa).

The N-terminal 56 residues, 1–56 (MLRFQRTVPRVAIRRLANVYSEGAVLHGYKVRRAQEIPEMRMAAVELEHEMTGARH), are a transit peptide targeting the mitochondrion. Residue His-84 coordinates Zn(2+). The active-site Proton acceptor is the Glu-87. His-88 is a Zn(2+) binding site. The active site involves Glu-160. A Zn(2+)-binding site is contributed by Glu-185.

It belongs to the peptidase M16 family. PreP subfamily. Monomer and homodimer; homodimerization is induced by binding of the substrate. Requires Zn(2+) as cofactor.

It localises to the mitochondrion intermembrane space. The protein localises to the mitochondrion matrix. In terms of biological role, degrades mitochondrial transit peptides after their cleavage in the intermembrane space or in the matrix, and presequence peptides; clearance of these peptides is required to keep the presequence processing machinery running. Preferentially cleaves the N-terminal side of paired basic amino acid residues. Also degrades other unstructured peptides. May function as an ATP-dependent peptidase as opposed to a metalloendopeptidase. The protein is Presequence protease, mitochondrial (CYM1) of Eremothecium gossypii (strain ATCC 10895 / CBS 109.51 / FGSC 9923 / NRRL Y-1056) (Yeast).